We begin with the raw amino-acid sequence, 170 residues long: Peptide deformylase (170 aa).

Fe cation-binding residues include Cys-91 and His-133. Glu-134 is an active-site residue. Fe cation is bound at residue His-137.

This sequence belongs to the polypeptide deformylase family. It depends on Fe(2+) as a cofactor.

The enzyme catalyses N-terminal N-formyl-L-methionyl-[peptide] + H2O = N-terminal L-methionyl-[peptide] + formate. Functionally, removes the formyl group from the N-terminal Met of newly synthesized proteins. Requires at least a dipeptide for an efficient rate of reaction. N-terminal L-methionine is a prerequisite for activity but the enzyme has broad specificity at other positions. This Glaesserella parasuis serovar 5 (strain SH0165) (Haemophilus parasuis) protein is Peptide deformylase.